A 146-amino-acid chain; its full sequence is Hemoglobin subunit beta (146 aa).

Val1 bears the N-acetylvaline mark. The Globin domain occupies 2–146 (HLSGEEKAAV…VANALAHKYH (145 aa)). Thr12 is subject to Phosphothreonine. Ser44 carries the post-translational modification Phosphoserine. The residue at position 59 (Lys59) is an N6-acetyllysine. Residue His63 coordinates heme b. Lys82 bears the N6-acetyllysine mark. Residue His92 participates in heme b binding. Residue Cys93 is modified to S-nitrosocysteine. An N6-acetyllysine modification is found at Lys144.

It belongs to the globin family. Heterotetramer of two alpha chains and two beta chains. As to expression, red blood cells.

Its function is as follows. Involved in oxygen transport from the lung to the various peripheral tissues. The chain is Hemoglobin subunit beta (HBB) from Pteropus alecto (Black flying fox).